A 419-amino-acid polypeptide reads, in one-letter code: UDP-N-acetylglucosamine 1-carboxyvinyltransferase (419 aa).

22-23 (KN) contributes to the phosphoenolpyruvate binding site. Residue Arg-91 participates in UDP-N-acetyl-alpha-D-glucosamine binding. Cys-115 acts as the Proton donor in catalysis. At Cys-115 the chain carries 2-(S-cysteinyl)pyruvic acid O-phosphothioketal. UDP-N-acetyl-alpha-D-glucosamine-binding positions include 120–124 (RPVDL), 160–163 (KVSV), Asp-305, and Ile-327.

Belongs to the EPSP synthase family. MurA subfamily.

It localises to the cytoplasm. It carries out the reaction phosphoenolpyruvate + UDP-N-acetyl-alpha-D-glucosamine = UDP-N-acetyl-3-O-(1-carboxyvinyl)-alpha-D-glucosamine + phosphate. Its pathway is cell wall biogenesis; peptidoglycan biosynthesis. Functionally, cell wall formation. Adds enolpyruvyl to UDP-N-acetylglucosamine. The chain is UDP-N-acetylglucosamine 1-carboxyvinyltransferase from Cronobacter sakazakii (strain ATCC BAA-894) (Enterobacter sakazakii).